Reading from the N-terminus, the 181-residue chain is uncharacterized protein (181 aa).

A helical transmembrane segment spans residues 133-153 (MCVCVHVCACVYVCMCVLVCM).

Its subcellular location is the membrane. This is an uncharacterized protein from Homo sapiens (Human).